The following is a 409-amino-acid chain: Gamma-glutamyl phosphate reductase (409 aa).

Belongs to the gamma-glutamyl phosphate reductase family.

The protein resides in the cytoplasm. The enzyme catalyses L-glutamate 5-semialdehyde + phosphate + NADP(+) = L-glutamyl 5-phosphate + NADPH + H(+). The protein operates within amino-acid biosynthesis; L-proline biosynthesis; L-glutamate 5-semialdehyde from L-glutamate: step 2/2. Its function is as follows. Catalyzes the NADPH-dependent reduction of L-glutamate 5-phosphate into L-glutamate 5-semialdehyde and phosphate. The product spontaneously undergoes cyclization to form 1-pyrroline-5-carboxylate. The protein is Gamma-glutamyl phosphate reductase of Bartonella tribocorum (strain CIP 105476 / IBS 506).